The sequence spans 110 residues: Iron-sulfur cluster assembly protein CyaY (110 aa).

Belongs to the frataxin family.

In terms of biological role, involved in iron-sulfur (Fe-S) cluster assembly. May act as a regulator of Fe-S biogenesis. The sequence is that of Iron-sulfur cluster assembly protein CyaY from Azotobacter vinelandii (strain DJ / ATCC BAA-1303).